The chain runs to 428 residues: Glycine reductase complex component B subunits alpha and beta (428 aa).

Cys-242 functions as the Schiff-base intermediate with substrate; via pyruvic acid in the catalytic mechanism. Cys-242 bears the Pyruvic acid (Cys) mark.

As to quaternary structure, heterohexamer of two alpha, two beta and two gamma subunits. Component of the glycine reductase complex, together with components A and C. PB is substrate specific. The peptide chain is cleaved into beta and alpha chains, and the alpha chain N-terminal cysteine is deaminated and oxidized to form a reactive pyruvoyl group.

The enzyme catalyses acetyl phosphate + [thioredoxin]-disulfide + NH4(+) + H2O = [thioredoxin]-dithiol + glycine + phosphate + H(+). In the first step of glycine reductase, the substrate is bound to component PB via a Schiff base intermediate. Then the PB-activated substrate is nucleophilically attacked by the selenol anion of component PA to transform it to a carboxymethylated selenoether and the respective amine. By action of component PC, acetyl phosphate is formed, leaving component PA in its oxidized state. Finally component PA becomes reduced by the thioredoxin system to start a new catalytic cycle of reductive deamination. This chain is Glycine reductase complex component B subunits alpha and beta (grdE), found in Peptoclostridium acidaminophilum (Eubacterium acidaminophilum).